The sequence spans 201 residues: Peptidyl-prolyl cis-trans isomerase FKBP11 (201 aa).

The first 27 residues, 1 to 27 (MTLRPSLLPLHLLLLLLLSAAVCRAEA), serve as a signal peptide directing secretion. In terms of domain architecture, PPIase FKBP-type spans 57-144 (GDTLHIHYTG…QYDVELIALI (88 aa)). A helical transmembrane segment spans residues 156–176 (ILPLVGMAMVPALLGLIGYHL).

This sequence belongs to the FKBP-type PPIase family. In terms of assembly, interacts with IFITM5.

The protein resides in the membrane. The catalysed reaction is [protein]-peptidylproline (omega=180) = [protein]-peptidylproline (omega=0). In terms of biological role, PPIases accelerate the folding of proteins during protein synthesis. The polypeptide is Peptidyl-prolyl cis-trans isomerase FKBP11 (FKBP11) (Homo sapiens (Human)).